A 68-amino-acid polypeptide reads, in one-letter code: Large ribosomal subunit protein uL29 (68 aa).

Belongs to the universal ribosomal protein uL29 family.

In Bradyrhizobium diazoefficiens (strain JCM 10833 / BCRC 13528 / IAM 13628 / NBRC 14792 / USDA 110), this protein is Large ribosomal subunit protein uL29.